Reading from the N-terminus, the 244-residue chain is Derlin-2.1 (244 aa).

At 1–21 (MAQAVEEWYKQMPIITRSYLT) the chain is on the cytoplasmic side. The helical transmembrane segment at 22-42 (AAVVTTVGCSLEIISPYNLYL) threads the bilayer. Residues 43–96 (NPTLVVKQYQFWRLVTNFLYFRKMDLDFLFHMFFLARYCKLLEENSFRGKTADF) lie on the Lumenal side of the membrane. A helical transmembrane segment spans residues 97–117 (LYMLLFGATVLTGIVLIGGMI). Over 118-121 (PYLS) the chain is Cytoplasmic. A helical membrane pass occupies residues 122 to 142 (VSFSKIIFLSNSLTFMMVYVW). Topologically, residues 143 to 152 (SKQNPYIHMS) are lumenal. The helical transmembrane segment at 153–173 (FLGLFTFTAAYLPWVLLGFSI) threads the bilayer. Residues 174-244 (LVGASAWGDF…HAPFDEIHQD (71 aa)) are Cytoplasmic-facing.

It belongs to the derlin family.

The protein resides in the endoplasmic reticulum membrane. Functionally, may be involved in the degradation process of specific misfolded endoplasmic reticulum (ER) luminal proteins. The polypeptide is Derlin-2.1 (DER2.1) (Arabidopsis thaliana (Mouse-ear cress)).